Here is a 105-residue protein sequence, read N- to C-terminus: Large ribosomal subunit protein uL24 (105 aa).

Belongs to the universal ribosomal protein uL24 family. Part of the 50S ribosomal subunit.

Its function is as follows. One of two assembly initiator proteins, it binds directly to the 5'-end of the 23S rRNA, where it nucleates assembly of the 50S subunit. Functionally, one of the proteins that surrounds the polypeptide exit tunnel on the outside of the subunit. The polypeptide is Large ribosomal subunit protein uL24 (Psychrobacter arcticus (strain DSM 17307 / VKM B-2377 / 273-4)).